The following is a 206-amino-acid chain: Nucleoside triphosphate pyrophosphatase (206 aa).

Catalysis depends on Asp76, which acts as the Proton acceptor.

This sequence belongs to the Maf family. Requires a divalent metal cation as cofactor.

It is found in the cytoplasm. The catalysed reaction is a ribonucleoside 5'-triphosphate + H2O = a ribonucleoside 5'-phosphate + diphosphate + H(+). It catalyses the reaction a 2'-deoxyribonucleoside 5'-triphosphate + H2O = a 2'-deoxyribonucleoside 5'-phosphate + diphosphate + H(+). In terms of biological role, nucleoside triphosphate pyrophosphatase. May have a dual role in cell division arrest and in preventing the incorporation of modified nucleotides into cellular nucleic acids. The protein is Nucleoside triphosphate pyrophosphatase of Streptomyces avermitilis (strain ATCC 31267 / DSM 46492 / JCM 5070 / NBRC 14893 / NCIMB 12804 / NRRL 8165 / MA-4680).